The sequence spans 179 residues: Large ribosomal subunit protein uL6 (179 aa).

This sequence belongs to the universal ribosomal protein uL6 family. In terms of assembly, part of the 50S ribosomal subunit.

In terms of biological role, this protein binds to the 23S rRNA, and is important in its secondary structure. It is located near the subunit interface in the base of the L7/L12 stalk, and near the tRNA binding site of the peptidyltransferase center. This Trichlorobacter lovleyi (strain ATCC BAA-1151 / DSM 17278 / SZ) (Geobacter lovleyi) protein is Large ribosomal subunit protein uL6.